The sequence spans 347 residues: Selenide, water dikinase (347 aa).

Sec-17 is a catalytic residue. Residue Sec-17 is a non-standard amino acid, selenocysteine. ATP contacts are provided by residues Lys-20 and 48–50 (TAD). Residue Asp-51 participates in Mg(2+) binding. Residues Asp-68, Asp-91, and 139-141 (GHS) contribute to the ATP site. Residue Asp-91 coordinates Mg(2+). Residue Asp-227 participates in Mg(2+) binding.

Belongs to the selenophosphate synthase 1 family. Class I subfamily. As to quaternary structure, homodimer. Mg(2+) serves as cofactor.

It catalyses the reaction hydrogenselenide + ATP + H2O = selenophosphate + AMP + phosphate + 2 H(+). Its function is as follows. Synthesizes selenophosphate from selenide and ATP. The sequence is that of Selenide, water dikinase from Haemophilus influenzae (strain 86-028NP).